The primary structure comprises 66 residues: Cytoplasmic envelopment protein 3 (66 aa).

G2 carries N-myristoyl glycine; by host lipidation.

The protein belongs to the herpesviridae cytoplasmic envelopment protein 3 family. In terms of assembly, interacts with cytoplasmic envelopment protein 2; this interaction is essential for the proper localization of each protein to the assembly complex and thus for the production of infectious virus. Post-translationally, phosphorylated. Phosphorylation does not seem to be required for recycling to the host Golgi apparatus. Packaging is selective for underphosphorylated forms.

It localises to the virion tegument. Its subcellular location is the virion membrane. The protein resides in the host cell membrane. It is found in the host Golgi apparatus membrane. In terms of biological role, plays an important role in the cytoplasmic envelopment of tegument proteins and capsids during the assembly and egress processes. Also participates in viral entry at the fusion step probably by regulating the core fusion machinery. The polypeptide is Cytoplasmic envelopment protein 3 (38) (Saimiriine herpesvirus 2 (strain 11) (SaHV-2)).